Here is a 211-residue protein sequence, read N- to C-terminus: Small ribosomal subunit protein eS8 (211 aa).

It belongs to the eukaryotic ribosomal protein eS8 family.

The chain is Small ribosomal subunit protein eS8 (rps8) from Dictyostelium discoideum (Social amoeba).